A 284-amino-acid polypeptide reads, in one-letter code: Bifunctional protein FolD (284 aa).

NADP(+) contacts are provided by residues 166–168 and Ile-232; that span reads GAS.

It belongs to the tetrahydrofolate dehydrogenase/cyclohydrolase family. As to quaternary structure, homodimer.

The enzyme catalyses (6R)-5,10-methylene-5,6,7,8-tetrahydrofolate + NADP(+) = (6R)-5,10-methenyltetrahydrofolate + NADPH. It carries out the reaction (6R)-5,10-methenyltetrahydrofolate + H2O = (6R)-10-formyltetrahydrofolate + H(+). Its pathway is one-carbon metabolism; tetrahydrofolate interconversion. Catalyzes the oxidation of 5,10-methylenetetrahydrofolate to 5,10-methenyltetrahydrofolate and then the hydrolysis of 5,10-methenyltetrahydrofolate to 10-formyltetrahydrofolate. This is Bifunctional protein FolD from Pseudomonas entomophila (strain L48).